The primary structure comprises 461 residues: Tumor necrosis factor receptor superfamily member 1A (461 aa).

An N-terminal signal peptide occupies residues 1 to 29 (MGLSTVPGLLLPLVLRALLVDVYPAGVHG). Over 30–210 (LVLHPGDREK…RNDFQDTGTT (181 aa)) the chain is Extracellular. TNFR-Cys repeat units follow at residues 43-82 (LCPQGKYSHPQNRSICCTKCHKGTYLHNDCLGPGLDTDCR), 83-125 (ECDN…DTVC), 126-166 (GCRK…DTIC), and 167-195 (NCHSGFFLRDKECVSCVNCKNADCKNLCP). Intrachain disulfides connect Cys-44/Cys-58, Cys-59/Cys-72, Cys-62/Cys-81, Cys-84/Cys-99, Cys-102/Cys-117, Cys-105/Cys-125, and Cys-127/Cys-143. The N-linked (GlcNAc...) asparagine glycan is linked to Asn-54. N-linked (GlcNAc...) asparagine glycosylation occurs at Asn-86. 2 N-linked (GlcNAc...) asparagine glycosylation sites follow: Asn-145 and Asn-151. Disulfide bonds link Cys-146–Cys-158, Cys-149–Cys-166, Cys-168–Cys-179, Cys-182–Cys-194, and Cys-185–Cys-190. The chain crosses the membrane as a helical span at residues 211–233 (VLLPLVIFFGLCLAFFLFVGLAC). Residues 234 to 461 (RYQRWKPKLY…RLAPAPHLLR (228 aa)) lie on the Cytoplasmic side of the membrane. Residues 340–350 (LPKWGGSAHSA) form an N-SMase activation domain (NSD) region. Positions 362–447 (PATLYAVVDG…GCLEDIEEAL (86 aa)) constitute a Death domain.

As to quaternary structure, binding of TNF to the extracellular domain leads to homotrimerization. The aggregated death domains provide a novel molecular interface that interacts specifically with the death domain of TRADD. Various TRADD-interacting proteins such as TRAFS, RIPK1 and possibly FADD, are recruited to the complex by their association with TRADD. This complex activates at least two distinct signaling cascades, apoptosis and NF-kappa-B signaling. Interacts with BAG4, BABAM2, FEM1B, GRB2, SQSTM1 and TRPC4AP. Interacts with DAB2IP. Interacts directly with NOL3 (via CARD domain); inhibits TNF-signaling pathway. Interacts with SH3RF2, TRADD and RIPK1. SH3RF2 facilitates the recruitment of RIPK1 and TRADD to TNFRSF1A in a TNF-alpha-dependent process. Interacts with PGLYRP1; this interaction is important for cell death induction. Interacts (via death domain) with MADD (via death domain).

The protein localises to the cell membrane. It localises to the golgi apparatus membrane. In terms of biological role, receptor for TNFSF2/TNF-alpha and homotrimeric TNFSF1/lymphotoxin-alpha. The adapter molecule FADD recruits caspase-8 to the activated receptor. The resulting death-inducing signaling complex (DISC) performs caspase-8 proteolytic activation which initiates the subsequent cascade of caspases (aspartate-specific cysteine proteases) mediating apoptosis. The sequence is that of Tumor necrosis factor receptor superfamily member 1A (TNFRSF1A) from Sus scrofa (Pig).